A 258-amino-acid chain; its full sequence is Protein CHAPERONE-LIKE PROTEIN OF POR1, chloroplastic (258 aa).

A chloroplast-targeting transit peptide spans 1 to 48 (MSSSLLLSGSTVSSSFIAPSKPSLVRNSSKTSLLPFRNVSRSFKTVKC). An N-acetylthreonine modification is found at Thr-49. Residues 67 to 122 (WDPYKRLGVSPYASEEEIWASRNFLLQQYAGHERSEESIEGAFEKLLMSSFIRRKK) are J-like domain required for holdase chaperone activity. The next 3 helical transmembrane spans lie at 162-182 (FLFA…GPAF), 207-227 (LIGI…IPMI), and 237-257 (TLEL…CTFL).

Belongs to the chaperone-like protein of POR1 protein family. Interacts with PORB in chloroplast. Interacts with PORA during plastid import. Expressed ubiquitously with higher levels in young leaves, flowers, and the root elongation zone.

The protein resides in the mitochondrion membrane. It is found in the plastid. Its subcellular location is the chloroplast envelope. The protein localises to the chloroplast thylakoid membrane. Functionally, essential protein required during embryogenesis. Exhibits holdase chaperone activity involved in the stabilization of NADPH:protochlorophyllide oxidoreductase (POR) proteins against photooxidative stress during POR proteins import into chloroplasts. Required for chloroplast biogenesis and development. When expressed in yeast, triggers mitochondria-mediated cell death associated with the loss of mitochondrial membrane potential. The chain is Protein CHAPERONE-LIKE PROTEIN OF POR1, chloroplastic from Arabidopsis thaliana (Mouse-ear cress).